Reading from the N-terminus, the 100-residue chain is U-myrmeciitoxin(01)-Mg7c (100 aa).

The first 17 residues, 1–17 (MKLSYLSLALAIILVLA), serve as a signal peptide directing secretion. Positions 18 to 50 (IVYSPHMEVKALADAEPDAIGFADAFGEADAEP) are excised as a propeptide. The O-linked (GalNAc...) serine glycan is linked to Ser-85. 2 O-linked (GalNAc...) threonine glycosylation sites follow: Thr-94 and Thr-95.

It belongs to the formicidae venom precursor-01 superfamily. Glycosylation is critical to maintaining the aqueous solubility of this protein, but does not directly contribute to its activity. In terms of tissue distribution, expressed by the venom gland.

Its subcellular location is the secreted. It localises to the target cell membrane. Its function is as follows. Neurotoxin that triggers pain behavior and inflammation in mammals, and is paralytic and lethal to insects. Causes a time-dependent increase in cell leak current. May act by targeting membranes. The protein is U-myrmeciitoxin(01)-Mg7c of Myrmecia gulosa (Red bulldog ant).